The primary structure comprises 385 residues: MNIHEYQGKEVLRKYGVSVPEGKVAFTAEEAVESAKSLSSSVYVVKAQIHAGGRGKAGGVKIAKSLDEVKAYAEELLGKTLVTHQTGPDGQVIKRLLIEEGCDIKKEYYIGLVLDRATSRIVLMASEEGGTEIEEVAEKTPEKIKKAVIDPAVGLQGYQAREIAFAINIPKELVGKAAKFMLGLYKAFVEKDCSIAEINPLVVTGDGNVMALDAKLNFDSNALYRQKDIMEYRDLDEEDPKEIEASKYDLSYISLDGNIGCMVNGAGLAMSTMDIIKHYGGEPANFLDVGGGATAEKVTEAFKIILSDQNVKGIFVNIFGGIMKCDVIAEGVVEATRQVGLTLPLVVRLEGTNVDLGKKILSESGLNITSAESMADGAQKIVSLV.

In terms of domain architecture, ATP-grasp spans 9–244 (KEVLRKYGVS…LDEEDPKEIE (236 aa)). ATP contacts are provided by residues Lys-46, 53–55 (GRG), Glu-99, Cys-102, and Glu-107. Residues Asn-199 and Asp-213 each contribute to the Mg(2+) site. Ser-220 carries the phosphoserine modification. Residues Asn-264 and 321–323 (GIM) each bind substrate.

It belongs to the succinate/malate CoA ligase beta subunit family. As to quaternary structure, heterotetramer of two alpha and two beta subunits. Interacts with BrxC. Mg(2+) serves as cofactor.

The enzyme catalyses succinate + ATP + CoA = succinyl-CoA + ADP + phosphate. It catalyses the reaction GTP + succinate + CoA = succinyl-CoA + GDP + phosphate. It functions in the pathway carbohydrate metabolism; tricarboxylic acid cycle; succinate from succinyl-CoA (ligase route): step 1/1. Its function is as follows. Succinyl-CoA synthetase functions in the citric acid cycle (TCA), coupling the hydrolysis of succinyl-CoA to the synthesis of either ATP or GTP and thus represents the only step of substrate-level phosphorylation in the TCA. The beta subunit provides nucleotide specificity of the enzyme and binds the substrate succinate, while the binding sites for coenzyme A and phosphate are found in the alpha subunit. The protein is Succinate--CoA ligase [ADP-forming] subunit beta of Bacillus subtilis (strain 168).